We begin with the raw amino-acid sequence, 361 residues long: MATTVHLSSFSLFIQSRGRRDNSISSVKSLKKRTGLSPSSALTSQGGRDMIPPQGKSNDHNSAFDFKLYMIRKAESVNAALDVSIVPLREPLTVQEAVRYSLLAGGKRVRPLLCIAVCELVGGDEATAMSAACAVEMIHTSSLIHDDLPCMDNADLRRGKPTNHKVFGEDMAVLAGDALLALAFEHMTVVSSGLVASERMIRAVVELARAIGTKGLVAGQVVDLSSERLNPHDVGLERLEFIHLHKTAALLEAAAVIGAIMGGGTEEEIEKLRKYARCIGLLFQVVDDILDVTKSTEELGKTAGKDVMAGKLTYPRLIGLERSREVAEKLSREAEEQLLGFESDKAAPLVALASYISCRND.

A chloroplast-targeting transit peptide spans 1-39 (MATTVHLSSFSLFIQSRGRRDNSISSVKSLKKRTGLSPS). Positions 24 to 58 (ISSVKSLKKRTGLSPSSALTSQGGRDMIPPQGKSN) are disordered. Polar residues predominate over residues 36–46 (LSPSSALTSQG). Residues K107, R110, and H139 each contribute to the isopentenyl diphosphate site. Positions 146 and 152 each coordinate Mg(2+). R157 contributes to the dimethylallyl diphosphate binding site. Residue R158 participates in isopentenyl diphosphate binding. Positions 246, 247, 284, 301, and 311 each coordinate dimethylallyl diphosphate.

The protein belongs to the FPP/GGPP synthase family. As to quaternary structure, monomer. Requires Mg(2+) as cofactor.

The protein localises to the plastid. It localises to the chloroplast. The catalysed reaction is isopentenyl diphosphate + dimethylallyl diphosphate = (2E)-geranyl diphosphate + diphosphate. It carries out the reaction isopentenyl diphosphate + (2E)-geranyl diphosphate = (2E,6E)-farnesyl diphosphate + diphosphate. It catalyses the reaction isopentenyl diphosphate + (2E,6E)-farnesyl diphosphate = (2E,6E,10E)-geranylgeranyl diphosphate + diphosphate. It functions in the pathway isoprenoid biosynthesis; farnesyl diphosphate biosynthesis; farnesyl diphosphate from geranyl diphosphate and isopentenyl diphosphate: step 1/1. Its pathway is isoprenoid biosynthesis; geranyl diphosphate biosynthesis; geranyl diphosphate from dimethylallyl diphosphate and isopentenyl diphosphate: step 1/1. It participates in isoprenoid biosynthesis; geranylgeranyl diphosphate biosynthesis; geranylgeranyl diphosphate from farnesyl diphosphate and isopentenyl diphosphate: step 1/1. In terms of biological role, catalyzes the trans-addition of the three molecules of IPP onto DMAPP to form geranylgeranyl pyrophosphate. The protein is Putative geranylgeranyl pyrophosphate synthase 8, chloroplastic of Arabidopsis thaliana (Mouse-ear cress).